Reading from the N-terminus, the 1498-residue chain is ATP-binding cassette sub-family C member 6 (1498 aa).

The Extracellular portion of the chain corresponds to 1 to 37 (MNRGRSMATPGEQCAGLRVWNQTEQEPAAYHLLSLCF). N-linked (GlcNAc...) asparagine glycosylation is present at Asn21. Residues 38-58 (VRAASSWVPPMYLWVLGPIYL) form a helical membrane-spanning segment. Topologically, residues 59-78 (LYIHRHGRCYLRMSHLFKTK) are cytoplasmic. The helical transmembrane segment at 79–99 (MVLGLALILLYTFNVAVPLWR) threads the bilayer. Topologically, residues 100–104 (IHQGV) are extracellular. A helical transmembrane segment spans residues 105–125 (PQAPELLIHPTVWLTTMSFAT). Topologically, residues 126–137 (FLIHMERRKGVR) are cytoplasmic. The chain crosses the membrane as a helical span at residues 138-155 (SSGVLFGYWLLCCILPGI). Residues 156-173 (NTVQQASAGNFRQEPLHH) lie on the Extracellular side of the membrane. Residues 174-194 (LATYLCLSLVVAELVLSCLVD) traverse the membrane as a helical segment. At 195–300 (QPPFFSEDSQ…RSQRGPLLRA (106 aa)) the chain is on the cytoplasmic side. The helical transmembrane segment at 301-321 (IWRVFRSTFLLGTLSLVISDA) threads the bilayer. The region spanning 309 to 592 (FLLGTLSLVI…LPFSVHCIVQ (284 aa)) is the ABC transmembrane type-1 1 domain. Residues 322-347 (FRFAVPKLLSLFLEFMGDRNSSAWTG) lie on the Extracellular side of the membrane. Asn341 carries an N-linked (GlcNAc...) asparagine glycan. A helical membrane pass occupies residues 348-368 (WLLAVLMFAAACLQTLFEQQH). The Cytoplasmic segment spans residues 369 to 424 (MYRAKVLQMRLRTAITGLVYRKVLVLSSGSRKSSAAGDVVNLVSVDIQRLAESIIY). The helical transmembrane segment at 425 to 445 (LNGLWLLFLWIFVCFVYLWQL) threads the bilayer. The Extracellular segment spans residues 446–448 (LGP). Residues 449–469 (SALTAVAVFLSLLPLNFFITK) traverse the membrane as a helical segment. Topologically, residues 470–531 (KRGFHQEEQM…ALKTSTLLFS (62 aa)) are cytoplasmic. A helical transmembrane segment spans residues 532–552 (VSLVSFQVSTFLVALVVFAVH). Topologically, residues 553-574 (TLVAEDNAMDAEKAFVTLTVLS) are extracellular. The helical transmembrane segment at 575 to 595 (ILNKAQAFLPFSVHCIVQARV) threads the bilayer. The Cytoplasmic portion of the chain corresponds to 596–934 (SFDRLAAFLC…VKTTIYLSYL (339 aa)). In terms of domain architecture, ABC transporter 1 spans 627–851 (ISVHNGTFAW…NGALVGLLDG (225 aa)). 661–668 (GPVGAGKS) serves as a coordination point for ATP. Residues 855-910 (PAGTHDAATSDDLGGFPGGGRPTCRPDRPRPTEAAPVKGRSTSEVQMEASLDDPEA) are disordered. Residues 935–955 (RAVGTPLCTYTLFLFLCQQVA) form a helical membrane-spanning segment. Residues 942-1223 (CTYTLFLFLC…VVRSWTDLEN (282 aa)) enclose the ABC transmembrane type-1 2 domain. Residues 956-992 (SFSQGYWLSLWADDPVVDGRQMHAALRGWVFGLLGCL) lie on the Extracellular side of the membrane. Residues 993 to 1013 (QAIGLFASMAAVFLGGARASG) traverse the membrane as a helical segment. At 1014-1056 (LLFRSLLWDVARSPIGFFERTPVGNLLNRFSKETDTVDVDIPD) the chain is on the cytoplasmic side. A helical transmembrane segment spans residues 1057-1077 (KLRSLLTYAFGLLEVGLAVTM). Ala1078 is a topological domain (extracellular). A helical membrane pass occupies residues 1079–1099 (TPLAIVAILPLMVLYAGFQSL). At 1100–1170 (YVATSCQLRR…VADRWLATNL (71 aa)) the chain is on the cytoplasmic side. Residues 1171 to 1191 (ELLGNGLVFVAATCAVLSKAH) traverse the membrane as a helical segment. Residues 1192–1193 (LS) are Extracellular-facing. A helical membrane pass occupies residues 1194–1214 (AGLVGFSVSAALQVTQTLQWV). The Cytoplasmic segment spans residues 1215–1498 (VRSWTDLENS…YRLAHESGLA (284 aa)). The region spanning 1260 to 1494 (IEFRDFGLRH…KGLFYRLAHE (235 aa)) is the ABC transporter 2 domain. Ser1281 carries the post-translational modification Phosphoserine. 1294-1301 (GRTGAGKS) serves as a coordination point for ATP.

The protein belongs to the ABC transporter superfamily. ABCC family. Conjugate transporter (TC 3.A.1.208) subfamily. In terms of processing, glycosylated.

The protein resides in the basolateral cell membrane. Its subcellular location is the basal cell membrane. The catalysed reaction is an S-substituted glutathione(in) + ATP + H2O = an S-substituted glutathione(out) + ADP + phosphate + H(+). The enzyme catalyses leukotriene C4(in) + ATP + H2O = leukotriene C4(out) + ADP + phosphate + H(+). Functionally, ATP-dependent transporter of the ATP-binding cassette (ABC) family that actively extrudes physiological compounds, and xenobiotics from cells. Mediates ATP-dependent transport of glutathione conjugates such as leukotriene-c4 (LTC4) and N-ethylmaleimide S-glutathione (NEM-GS) (in vitro), and an anionic cyclopentapeptide endothelin antagonist, BQ-123. May contribute to regulate the transport of organic compounds in testes across the blood-testis-barrier. Mediates the release of nucleoside triphosphates, predominantly ATP, into the circulation, where it is rapidly converted into AMP and the mineralization inhibitor inorganic pyrophosphate (PPi) by the ecto-enzyme ectonucleotide pyrophosphatase phosphodiesterase 1 (ENPP1), therefore playing a role in PPi homeostasis. The chain is ATP-binding cassette sub-family C member 6 (Abcc6) from Mus musculus (Mouse).